A 278-amino-acid chain; its full sequence is Ribosomal RNA small subunit methyltransferase A (278 aa).

S-adenosyl-L-methionine-binding residues include asparagine 25, leucine 27, glycine 52, glutamate 73, aspartate 97, and asparagine 117.

The protein belongs to the class I-like SAM-binding methyltransferase superfamily. rRNA adenine N(6)-methyltransferase family. RsmA subfamily.

It localises to the cytoplasm. It carries out the reaction adenosine(1518)/adenosine(1519) in 16S rRNA + 4 S-adenosyl-L-methionine = N(6)-dimethyladenosine(1518)/N(6)-dimethyladenosine(1519) in 16S rRNA + 4 S-adenosyl-L-homocysteine + 4 H(+). Functionally, specifically dimethylates two adjacent adenosines (A1518 and A1519) in the loop of a conserved hairpin near the 3'-end of 16S rRNA in the 30S particle. May play a critical role in biogenesis of 30S subunits. The polypeptide is Ribosomal RNA small subunit methyltransferase A (Desulfitobacterium hafniense (strain DSM 10664 / DCB-2)).